We begin with the raw amino-acid sequence, 86 residues long: Co-chaperonin GroES (86 aa).

The protein belongs to the GroES chaperonin family. As to quaternary structure, heptamer of 7 subunits arranged in a ring. Interacts with the chaperonin GroEL.

The protein localises to the cytoplasm. Its function is as follows. Together with the chaperonin GroEL, plays an essential role in assisting protein folding. The GroEL-GroES system forms a nano-cage that allows encapsulation of the non-native substrate proteins and provides a physical environment optimized to promote and accelerate protein folding. GroES binds to the apical surface of the GroEL ring, thereby capping the opening of the GroEL channel. This chain is Co-chaperonin GroES, found in Campylobacter concisus (strain 13826).